A 284-amino-acid chain; its full sequence is Phosphoribosylaminoimidazole-succinocarboxamide synthase (284 aa).

It belongs to the SAICAR synthetase family.

The enzyme catalyses 5-amino-1-(5-phospho-D-ribosyl)imidazole-4-carboxylate + L-aspartate + ATP = (2S)-2-[5-amino-1-(5-phospho-beta-D-ribosyl)imidazole-4-carboxamido]succinate + ADP + phosphate + 2 H(+). It functions in the pathway purine metabolism; IMP biosynthesis via de novo pathway; 5-amino-1-(5-phospho-D-ribosyl)imidazole-4-carboxamide from 5-amino-1-(5-phospho-D-ribosyl)imidazole-4-carboxylate: step 1/2. The polypeptide is Phosphoribosylaminoimidazole-succinocarboxamide synthase (Chromobacterium violaceum (strain ATCC 12472 / DSM 30191 / JCM 1249 / CCUG 213 / NBRC 12614 / NCIMB 9131 / NCTC 9757 / MK)).